Here is a 343-residue protein sequence, read N- to C-terminus: Phosphoribosylformylglycinamidine cyclo-ligase (343 aa).

The protein belongs to the AIR synthase family.

The protein resides in the cytoplasm. It carries out the reaction 2-formamido-N(1)-(5-O-phospho-beta-D-ribosyl)acetamidine + ATP = 5-amino-1-(5-phospho-beta-D-ribosyl)imidazole + ADP + phosphate + H(+). It functions in the pathway purine metabolism; IMP biosynthesis via de novo pathway; 5-amino-1-(5-phospho-D-ribosyl)imidazole from N(2)-formyl-N(1)-(5-phospho-D-ribosyl)glycinamide: step 2/2. This is Phosphoribosylformylglycinamidine cyclo-ligase from Rippkaea orientalis (strain PCC 8801 / RF-1) (Cyanothece sp. (strain PCC 8801)).